The chain runs to 499 residues: MRGSLCLALAASILHVSLQGEFQRKLYKDLVKNYNPLERPVANDSLPLTVYFSLSLLQIMDVDEKNQVLTTNIWLQMTWTDHYLQWNASEYPGVKTVRFPDGQIWKPDILLYNSADERFDATFHTNVLVNSSGHCQYLPPGIFKSSCYIDVRWFPFDVQQCKLKFGSWSYGGWSLDLQMQEADISGYIPNGEWDLVGVLGKRSEKFYECCKEPYPDVTFTVSIRRRTLYYGLNLLIPCVLISALALLVFLLPADSGEKISLGITVLLSLTVFMLLVAEIMPATSDSVPLIAQYFASTMIIVGLSVVVTVIVLQYHHHDPDGGKMPKWTRVVLLNWCAWFLRMKRPGEDKVRPACQHNERRCSLASVEMSAVAGPPATNGNLLYIGFRGLDTMHCAPTPDSGVVCGRVACSPTHDEHLLHAGQPSEGDPDLAKILEEVRYIAHRFRCQDESEAVCSEWKFAACVVDRLCLMAFSVFTILCTIGILMSAPNFVEAVSKDFA.

The signal sequence occupies residues 1–19 (MRGSLCLALAASILHVSLQ). The Extracellular portion of the chain corresponds to 20 to 230 (GEFQRKLYKD…VSIRRRTLYY (211 aa)). R39 and V41 together coordinate Ca(2+). N43, N87, and N130 each carry an N-linked (GlcNAc...) asparagine glycan. A disulfide bridge links C147 with C161. Ca(2+)-binding residues include S169 and Y207. Residues C209 and C210 are joined by a disulfide bond. 3 consecutive transmembrane segments (helical) span residues 231 to 251 (GLNL…VFLL), 259 to 279 (ISLG…VAEI), and 292 to 312 (QYFA…VIVL). Residues 257–264 (EKISLGIT) form an essential for TMEM35A/NACHO-mediated proper subunit assembly and trafficking to cell membrane region. Topologically, residues 313-466 (QYHHHDPDGG…WKFAACVVDR (154 aa)) are cytoplasmic. Residues 467–487 (LCLMAFSVFTILCTIGILMSA) form a helical membrane-spanning segment.

Belongs to the ligand-gated ion channel (TC 1.A.9) family. Acetylcholine receptor (TC 1.A.9.1) subfamily. Alpha-7/CHRNA7 sub-subfamily. Homopentamer. Homooligomer of the short form gives rise to unfunctional channels, as does coexpression of both long and short forms of the receptor. Can also form heteropentamers with CHRNB2, mainly found in basal forebrain cholinergic neurons. Interacts with RIC3; which is required for proper folding and assembly. Interacts with LYPD6. Interacts with CANX. Glycosylations at Asn-43, Asn-87 and Asn-130 are essential for TMEM35A/NACHO-mediated proper subunit assembly and trafficking to the cell membrane. As to expression, at least in chromaffin cells.

The protein resides in the postsynaptic cell membrane. Its subcellular location is the cell membrane. It carries out the reaction Ca(2+)(in) = Ca(2+)(out). It catalyses the reaction K(+)(in) = K(+)(out). The enzyme catalyses Na(+)(in) = Na(+)(out). The catalysed reaction is choline(out) = choline(in). It carries out the reaction NH4(+)(in) = NH4(+)(out). It catalyses the reaction L-arginine(in) = L-arginine(out). The enzyme catalyses guanidine(out) = guanidine(in). Activated by a myriad of ligands such as acetylcholine, cytisine, nicotine, choline and epibatidine. Oligomeric amyloid-beta protein 42 activates specifially CHRNA7:CHRNB2 nAchRs. Activity is modulated by positive allosteric modulators (PAMs), such as flavonoids, with a wide range of chemical diversity, pharmacological sensitivity and efficacy. AChR activity is inhibited by the antagonists alpha-conotoxons RgIA, ImI and ImII, small disulfide-constrained peptides from cone snails. Alpha-conotoxin PnIC selectively inhibits CHRNA7:CHRNB2 over CHRNA7 homopentamer. Its function is as follows. Component of neuronal acetylcholine receptors (nAChRs) that function as pentameric, ligand-gated cation channels with high calcium permeability among other activities. nAChRs are excitatory neurotrasnmitter receptors formed by a collection of nAChR subunits known to mediate synaptic transmission in the nervous system and the neuromuscular junction. Each nAchR subunit confers differential attributes to channel properties, including activation, deactivation and desensitization kinetics, pH sensitivity, cation permeability, and binding to allosteric modulators. CHRNA7 forms homopentameric neuronal acetylcholine receptors abundantly expressed in the central nervous system, characterized by fast desensitization and high calcium permeability. Also forms heteropentamers with CHRNB2, mainly expressed in basal forebrain cholinergic neurons. Involved in the modulation of calcium-dependent signaling pathways and influences the release of neurotransmitters, including dopamine, glutamate and GABA. Also expressed in non-neuronal cells such as immune cells like lymphocytes, monocytes and macrophages. In T cells, activation induces metabotropic signaling that results in an increase of intracellular Ca2+ concentrations, independent of ionotropic receptor functions. In macrophages, required for acetylcholine-mediated inhibition of TNF and other inflammatory cytokine release. Once activated by acetylcholine, nicotine or other agonists, selectively inhibits production of pro-inflammatory cytokines while leaving anti-inflammatory cytokines undisturbed. Stimulates the cholinergic anti-inflammatory pathway, controlling inflammation by inhibiting NFKB nuclear translocation and activating the JAK2-STAT3 pathway, independently of ion channel activity. Also expressed in the urothelium where it modulates reflex bladder activity by increasing intracellular calcium through internal stores and decreasing basal ATP release. This chain is Neuronal acetylcholine receptor subunit alpha-7 (CHRNA7), found in Bos taurus (Bovine).